The chain runs to 861 residues: Probable beta-glucosidase A (861 aa).

The first 19 residues, M1–A19, serve as a signal peptide directing secretion. N62, N212, and N253 each carry an N-linked (GlcNAc...) asparagine glycan. Residue D281 is part of the active site. 9 N-linked (GlcNAc...) asparagine glycosylation sites follow: N316, N323, N355, N443, N524, N543, N565, N669, and N713. Residues D730–G754 form a disordered region. Residue N846 is glycosylated (N-linked (GlcNAc...) asparagine).

The protein belongs to the glycosyl hydrolase 3 family.

Its subcellular location is the secreted. It catalyses the reaction Hydrolysis of terminal, non-reducing beta-D-glucosyl residues with release of beta-D-glucose.. It participates in glycan metabolism; cellulose degradation. Beta-glucosidases are one of a number of cellulolytic enzymes involved in the degradation of cellulosic biomass. Catalyzes the last step releasing glucose from the inhibitory cellobiose. The protein is Probable beta-glucosidase A (bglA) of Aspergillus oryzae (strain ATCC 42149 / RIB 40) (Yellow koji mold).